Consider the following 536-residue polypeptide: CTP synthase (536 aa).

Positions 1–267 (MTKFIFVTGG…DDIVIKRLEL (267 aa)) are amidoligase domain. S13 contacts CTP. Residue S13 coordinates UTP. Position 14 to 19 (14 to 19 (SLGKGI)) interacts with ATP. Y54 lines the L-glutamine pocket. D71 is an ATP binding site. The Mg(2+) site is built by D71 and E141. Residues 148–150 (DIE), 188–193 (KTKPTQ), and K224 each bind CTP. UTP-binding positions include 188 to 193 (KTKPTQ) and K224. 240–242 (RDA) is an ATP binding site. The Glutamine amidotransferase type-1 domain maps to 293-535 (TIGLVGKYVS…IEASLNHQQS (243 aa)). G355 is a binding site for L-glutamine. Residue C382 is the Nucleophile; for glutamine hydrolysis of the active site. Residues 383-386 (LGMQ), E406, and R463 contribute to the L-glutamine site. Catalysis depends on residues H508 and E510.

The protein belongs to the CTP synthase family. In terms of assembly, homotetramer.

The catalysed reaction is UTP + L-glutamine + ATP + H2O = CTP + L-glutamate + ADP + phosphate + 2 H(+). It catalyses the reaction L-glutamine + H2O = L-glutamate + NH4(+). The enzyme catalyses UTP + NH4(+) + ATP = CTP + ADP + phosphate + 2 H(+). Its pathway is pyrimidine metabolism; CTP biosynthesis via de novo pathway; CTP from UDP: step 2/2. With respect to regulation, allosterically activated by GTP, when glutamine is the substrate; GTP has no effect on the reaction when ammonia is the substrate. The allosteric effector GTP functions by stabilizing the protein conformation that binds the tetrahedral intermediate(s) formed during glutamine hydrolysis. Inhibited by the product CTP, via allosteric rather than competitive inhibition. Its function is as follows. Catalyzes the ATP-dependent amination of UTP to CTP with either L-glutamine or ammonia as the source of nitrogen. Regulates intracellular CTP levels through interactions with the four ribonucleotide triphosphates. The polypeptide is CTP synthase (Staphylococcus saprophyticus subsp. saprophyticus (strain ATCC 15305 / DSM 20229 / NCIMB 8711 / NCTC 7292 / S-41)).